A 182-amino-acid polypeptide reads, in one-letter code: Neuropeptide CCHamide-1 (182 aa).

An N-terminal signal peptide occupies residues 1–22; that stretch reads MWYSKCSWTLVVLVALFALVTG. C24 and C31 are joined by a disulfide. A Histidine amide modification is found at H35. Positions 39–182 are excised as a propeptide; the sequence is SGGKAVIDAK…ENYSGYELTK (144 aa). Disordered regions lie at residues 67–103 and 133–154; these read NNNN…AAPA and QLQD…DAAA. The span at 87–103 shows a compositional bias: low complexity; that stretch reads RNTNANSANNIPLAAPA. Residue N174 is glycosylated (N-linked (GlcNAc...) asparagine).

As to expression, expressed in endocrine cells of the larval midgut (at protein level). In the brain, expressed in the optic lobes, lateral protocerebrum, subesophageal ganglion, and intermediate and superior medial protocerebrum (at protein level). Expressed in DN1a neurons but not in other clock neurons and expression follows a rhythmic pattern controlled by the circadian clock (at protein level). In the posterior midgut, expressed in enteroendocrine cells (at protein level). Low levels in larval brain with higher levels in larval and adult gut and adult brain.

It is found in the secreted. Its function is as follows. Neuropeptide ligand for the CCHamide-1 receptor CCHa1-R. Neuromessenger mediating signaling between neuronal cells of the circadian clock network involved in regulation of sleep latency (the time required to fall asleep), amount of sleep and depth of sleep (arousability). Together with PDF, involved in regulating intensity and periodicity of daytime activity. In subsets of clock neurons modulates the rhythmic expression of PDP1 and PDF, and together with PDF modulates the rhythmic expression of circadian protein PER/period, but not TIM/timeless. Mediates signaling from DN1a (anterior dorsal neurons 1) clock neurons to s-LNv (small ventral lateral neurons) clock neurons through CCHa1-R, contributing to regulation of activity rhythms by the circadian clock, particularly in the morning. May be involved in signaling between clock neurons and non-clock neurons, such as the fan-shaped body, involved in sleep homeostasis. In response to a high protein diet mediates hormonal signaling between the gut and a CCHa1-R expressing subset of dopaminergic cells in the protocerebral anterior medial (PAM) cluster of the brain. This suppresses arousability by mechano-sensory stimulation (but not thermal stimulation) but is not involved in regulation of sleep patterns. The protein is Neuropeptide CCHamide-1 of Drosophila melanogaster (Fruit fly).